Here is a 126-residue protein sequence, read N- to C-terminus: Large ribosomal subunit protein bL12 (126 aa).

Belongs to the bacterial ribosomal protein bL12 family. In terms of assembly, homodimer. Part of the ribosomal stalk of the 50S ribosomal subunit. Forms a multimeric L10(L12)X complex, where L10 forms an elongated spine to which 2 to 4 L12 dimers bind in a sequential fashion. Binds GTP-bound translation factors.

In terms of biological role, forms part of the ribosomal stalk which helps the ribosome interact with GTP-bound translation factors. Is thus essential for accurate translation. In Francisella tularensis subsp. mediasiatica (strain FSC147), this protein is Large ribosomal subunit protein bL12.